The chain runs to 341 residues: Beta-ketoacyl-[acyl-carrier-protein] synthase III 1 (341 aa).

Residues C113 and H249 contribute to the active site. Positions 250–254 are ACP-binding; the sequence is QANIR. Residue N279 is part of the active site.

The protein belongs to the thiolase-like superfamily. FabH family. In terms of assembly, homodimer.

The protein resides in the cytoplasm. It carries out the reaction malonyl-[ACP] + acetyl-CoA + H(+) = 3-oxobutanoyl-[ACP] + CO2 + CoA. Its pathway is lipid metabolism; fatty acid biosynthesis. In terms of biological role, catalyzes the condensation reaction of fatty acid synthesis by the addition to an acyl acceptor of two carbons from malonyl-ACP. Catalyzes the first condensation reaction which initiates fatty acid synthesis and may therefore play a role in governing the total rate of fatty acid production. Possesses both acetoacetyl-ACP synthase and acetyl transacylase activities. Its substrate specificity determines the biosynthesis of branched-chain and/or straight-chain of fatty acids. This is Beta-ketoacyl-[acyl-carrier-protein] synthase III 1 from Deinococcus radiodurans (strain ATCC 13939 / DSM 20539 / JCM 16871 / CCUG 27074 / LMG 4051 / NBRC 15346 / NCIMB 9279 / VKM B-1422 / R1).